The sequence spans 956 residues: Thrombospondin-3 (956 aa).

Residues 1 to 22 (METQELRGALALLLLCFFTSAS) form the signal peptide. Residues 23-193 (QDLQVIDLLT…VESMKIILGG (171 aa)) enclose the Laminin G-like domain. Disulfide bonds link cysteine 278/cysteine 289, cysteine 283/cysteine 300, cysteine 303/cysteine 314, cysteine 320/cysteine 332, cysteine 326/cysteine 341, cysteine 344/cysteine 368, cysteine 374/cysteine 388, cysteine 382/cysteine 397, cysteine 400/cysteine 412, cysteine 418/cysteine 432, cysteine 426/cysteine 442, cysteine 444/cysteine 455, cysteine 471/cysteine 478, cysteine 483/cysteine 503, cysteine 519/cysteine 539, cysteine 542/cysteine 562, cysteine 578/cysteine 598, cysteine 601/cysteine 621, cysteine 639/cysteine 659, cysteine 679/cysteine 699, and cysteine 715/cysteine 936. Asparagine 310 carries N-linked (GlcNAc...) asparagine glycosylation. An EGF-like 1; calcium-binding domain is found at 316-354 (DINECAHADPCFPGSSCINTMPGFHCEACPRGYKGTQVS). An EGF-like 2; calcium-binding domain is found at 370–410 (DIDECNDGNNGGCDPNSICTNTVGSFKCGPCRLGFLGNQSQ). Asparagine 407 is a glycosylation site (N-linked (GlcNAc...) asparagine). In terms of domain architecture, EGF-like 3 spans 414-456 (PARTCHSPAHSPCHIHAHCLFERNGAVSCQCNVGWAGNGNVCG). 8 TSP type-3 repeats span residues 457–491 (TDTD…NSGQ), 492–527 (EDAD…NKDQ), 528–550 (QNSD…NNDQ), 551–586 (KDTD…NPLQ), 587–609 (TDRD…NPTQ), 610–647 (TDAD…NSSQ), 648–687 (LDSD…NPNQ), and 688–723 (KDSD…EVTL). 2 disordered regions span residues 518–537 (NCRL…SFGD) and 546–702 (PNND…CEDD). Acidic residues predominate over residues 555–568 (GNGEGDACDNDVDG). Residues 612–628 (ADSDLVGDVCDTNEDSD) show a composition bias toward acidic residues. Asparagine 644 carries N-linked (GlcNAc...) asparagine glycosylation. Residues 650–667 (SDNDGLGDECDGDDDNDG) show a composition bias toward acidic residues. The TSP C-terminal domain occupies 727-941 (RAYQTVVLDP…LQYRCNDTVP (215 aa)). An N-linked (GlcNAc...) asparagine glycan is attached at asparagine 937.

Belongs to the thrombospondin family. In terms of assembly, oligomer; disulfide-linked.

Adhesive glycoprotein that mediates cell-to-cell and cell-to-matrix interactions. Can bind to fibrinogen, fibronectin, laminin and type V collagen. This chain is Thrombospondin-3 (THBS3), found in Homo sapiens (Human).